We begin with the raw amino-acid sequence, 460 residues long: Argininosuccinate lyase (460 aa).

Belongs to the lyase 1 family. Argininosuccinate lyase subfamily.

It localises to the cytoplasm. It carries out the reaction 2-(N(omega)-L-arginino)succinate = fumarate + L-arginine. The protein operates within amino-acid biosynthesis; L-arginine biosynthesis; L-arginine from L-ornithine and carbamoyl phosphate: step 3/3. The sequence is that of Argininosuccinate lyase from Solibacter usitatus (strain Ellin6076).